A 190-amino-acid polypeptide reads, in one-letter code: dTTP/UTP pyrophosphatase (190 aa).

The active-site Proton acceptor is the D70.

The protein belongs to the Maf family. YhdE subfamily. It depends on a divalent metal cation as a cofactor.

Its subcellular location is the cytoplasm. The catalysed reaction is dTTP + H2O = dTMP + diphosphate + H(+). It catalyses the reaction UTP + H2O = UMP + diphosphate + H(+). Functionally, nucleoside triphosphate pyrophosphatase that hydrolyzes dTTP and UTP. May have a dual role in cell division arrest and in preventing the incorporation of modified nucleotides into cellular nucleic acids. The protein is dTTP/UTP pyrophosphatase of Paramagnetospirillum magneticum (strain ATCC 700264 / AMB-1) (Magnetospirillum magneticum).